The primary structure comprises 1321 residues: Serine/threonine-protein kinase SIK3 (1321 aa).

The disordered stretch occupies residues Met1 to Met59. Over residues Gly8–Pro22 the composition is skewed to gly residues. Low complexity predominate over residues Ala36–Gln47. The 252-residue stretch at Tyr66–Met317 folds into the Protein kinase domain. Thr71 is modified (phosphothreonine). Residues Ile72–Val80 and Lys95 contribute to the ATP site. Glu113 carries the phosphothreonine modification. Asp188 serves as the catalytic Proton acceptor. Phosphothreonine; by LKB1 is present on Thr221. Positions Pro344–Asp384 constitute a UBA domain. Phosphothreonine is present on Thr469. A phosphoserine mark is found at Ser551, Ser591, and Ser592. A disordered region spans residues Thr585 to Leu614. The span at Val587–Gln598 shows a compositional bias: acidic residues. A compositionally biased stretch (polar residues) spans Ala600–His613. Phosphoserine is present on residues Ser626 and Ser647. The tract at residues Ile727–Pro772 is disordered. Residues Ala763 to Pro772 are compositionally biased toward polar residues. Phosphoserine is present on Ser866. Residues Leu894–Ser945 form a disordered region. A compositionally biased stretch (low complexity) spans Ser896 to Ser909. Over residues Ala935–Ser945 the composition is skewed to polar residues. The residue at position 978 (Ser978) is a Phosphoserine. Arg986 carries the omega-N-methylarginine modification. Polar residues predominate over residues Ser1256–Asp1265. A disordered region spans residues Ser1256–His1289.

It belongs to the protein kinase superfamily. CAMK Ser/Thr protein kinase family. SNF1 subfamily. Binds to and is activated by YWHAZ when phosphorylated on Thr-221. Interacts with 14-3-3 proteins. Interacts with HDAC4; this interaction leads to HDAC4 retention in the cytoplasm. Interacts with DEPTOR, MLST8/GbetaL, RICTOR and RPTOR. Mg(2+) is required as a cofactor. Post-translationally, phosphorylated at Thr-221 by STK11/LKB1 in complex with STE20-related adapter-alpha (STRADA) pseudo kinase and CAB39. Phosphorylation at Thr-221 is inhibited in response to PTHLH/PTHrP. Phosphorylated at Thr-469 and Ser-551 in response to cAMP signaling. Expressed in chondrocytes.

The protein localises to the cytoplasm. It carries out the reaction L-seryl-[protein] + ATP = O-phospho-L-seryl-[protein] + ADP + H(+). It catalyses the reaction L-threonyl-[protein] + ATP = O-phospho-L-threonyl-[protein] + ADP + H(+). With respect to regulation, activated by phosphorylation on Thr-221. Functionally, positive regulator of mTOR signaling that functions by triggering the degradation of DEPTOR, an mTOR inhibitor. Involved in the dynamic regulation of mTOR signaling in chondrocyte differentiation during skeletogenesis. Negatively regulates cAMP signaling pathway possibly by acting on CRTC2/TORC2 and CRTC3/TORC3. Prevents HDAC4 translocation to the nucleus. The polypeptide is Serine/threonine-protein kinase SIK3 (Homo sapiens (Human)).